A 931-amino-acid polypeptide reads, in one-letter code: MPKARVYELAKELGVDSKTVLSKLEAMGEFVKSASSTVEPPVARKLRNAFASSGQGNASDSKKPGHTAKKPAEPASHSMPKPAAPSAPKPAAPAAPKPRHAASKSDAPKPGHRAPRPGESRQHGNRPNGNAPRPQGGDRRQSGRPTAVPGARPQHGNAPQGGNNANGAKPHTPGPRPGNNPFSRKQGMHTPTPGDIPRPHPMNRPSVNNGEGRRGGRPGQGGGQRGGFRGRPGQGGAKPGQWGQHRPGQGGGQRPAGGGNRFGGNGGGFQGGNSAPSNGPARGGRGRGGAAGAFGRQGGKSSKARKNRLAKRQEFQEMKAPVIGGVRIPTGNGQEVRLRQGASLADLAEKINVNPAALVTVLFHLGEMATATQSLDEATFQILGEEIGWNIKIVSAEEEDKELLQQFDINLDEEELQEDGDLKPRPPVVTVMGHVDHGKTRLLDTIRRTNVIEGEAGGITQRIGAYQVTVNLEGEPRKITFLDTPGHEAFTAMRARGAELTDVAILVVAADDGVMPQTVEAINHAQAAHVPIVVAVNKIDKPGANPDKVRGQLTEYGLVPEEYGGNTMFVDISAKQGTNVDKLLEAVLLTADAELDLRANPDMDARGATVEARLDKGRGAVATVLVQSGTLHIGDAIVAGTSYGRVRAMLDENGNHMQEAGPSTPVQVLGLTSVPTAGDLFLVASDDRTARQIAEKRQATERAAQLAKRRKVVSLESLKEQFAKSEVDMLNIVIKGDSSGSVEALEDSLMKIEVSDEVGIQVIHRGVGAITQNDVNLATVDKAVIIGFNVRPNRQVADLAEREGVEIKYYSIIYKAIEDIEASLKGMLKPEYEEVVTSHSEIREIFRSSKFGNIAGVMVQDGEVKRGTKCRILRNGIATVNDLEISSLRRFKDDVTSVKEGYEAGINLGTFNDIEIGDIIETFEMQEIERK.

A disordered region spans residues 32 to 310; the sequence is KSASSTVEPP…SSKARKNRLA (279 aa). Over residues 50–59 the composition is skewed to polar residues; that stretch reads FASSGQGNAS. Residues 82–96 are compositionally biased toward pro residues; it reads PAAPSAPKPAAPAAP. Positions 156 to 168 are enriched in low complexity; sequence GNAPQGGNNANGA. Composition is skewed to gly residues over residues 217-238, 248-271, and 281-298; these read RPGQ…GGAK, GQGG…GFQG, and ARGG…GRQG. Residues 424–596 enclose the tr-type G domain; sequence PRPPVVTVMG…VLLTADAELD (173 aa). The G1 stretch occupies residues 433–440; that stretch reads GHVDHGKT. 433–440 is a GTP binding site; that stretch reads GHVDHGKT. Residues 458–462 form a G2 region; that stretch reads GITQR. Residues 483–486 form a G3 region; that stretch reads DTPG. Residues 483–487 and 537–540 each bind GTP; these read DTPGH and NKID. A G4 region spans residues 537-540; sequence NKID. The segment at 573-575 is G5; the sequence is SAK.

The protein belongs to the TRAFAC class translation factor GTPase superfamily. Classic translation factor GTPase family. IF-2 subfamily.

The protein localises to the cytoplasm. In terms of biological role, one of the essential components for the initiation of protein synthesis. Protects formylmethionyl-tRNA from spontaneous hydrolysis and promotes its binding to the 30S ribosomal subunits. Also involved in the hydrolysis of GTP during the formation of the 70S ribosomal complex. The chain is Translation initiation factor IF-2 from Bifidobacterium adolescentis (strain ATCC 15703 / DSM 20083 / NCTC 11814 / E194a).